A 350-amino-acid chain; its full sequence is Divinyl chlorophyll a/b light-harvesting protein PcbB (350 aa).

The next 6 helical transmembrane spans lie at 27–47 (FLAA…SFTL), 89–109 (IVVT…GGLM), 141–161 (FILG…VEWA), 202–222 (VMGG…WHIV), 244–264 (LSWA…WCAS), and 305–325 (LTNI…WHAL).

The protein belongs to the PsbB/PsbC family. IsiA/Pcb subfamily. In terms of assembly, the antenna complex consists of divinyl chlorophylls (a and b) and divinyl chlorophyll a/b binding proteins. Under iron-starvation forms a complex with PSI, consisting of a PSI trimer surrounded by a ring composed of 18 PcbB subunits. Requires divinyl chlorophyll a as cofactor. It depends on divinyl chlorophyll b as a cofactor.

It localises to the cellular thylakoid membrane. The antenna complex functions as a light receptor, it captures and delivers excitation energy to photosystems I. The Prochlorales pcb genes are not related to higher plant LHCs. This chain is Divinyl chlorophyll a/b light-harvesting protein PcbB (pcbB), found in Prochlorococcus marinus (strain MIT 9313).